The sequence spans 217 residues: Large ribosomal subunit protein uL1 (217 aa).

The protein belongs to the universal ribosomal protein uL1 family. In terms of assembly, part of the 50S ribosomal subunit.

In terms of biological role, binds directly to 23S rRNA. Probably involved in E site tRNA release. Its function is as follows. Protein L1 is also a translational repressor protein, it controls the translation of its operon by binding to its mRNA. The polypeptide is Large ribosomal subunit protein uL1 (Thermoplasma volcanium (strain ATCC 51530 / DSM 4299 / JCM 9571 / NBRC 15438 / GSS1)).